We begin with the raw amino-acid sequence, 987 residues long: KAT8 regulatory NSL complex subunit 1-like protein (987 aa).

A Glycyl lysine isopeptide (Lys-Gly) (interchain with G-Cter in SUMO2) cross-link involves residue K134. S462 bears the Phosphoserine mark. The interval 708-738 is disordered; that stretch reads RKKRHLSETALGERTKLEESDFQHTESGSHS. Over residues 718-731 the composition is skewed to basic and acidic residues; sequence LGERTKLEESDFQH. The PEHE domain maps to 794–915; sequence EILTPSWRMV…QSQETKSLWW (122 aa). The residue at position 859 (K859) is an N6-acetyllysine. Residues 949–972 form a disordered region; the sequence is GEIFGTSVPENGHHPKKQSDGMEE. Residues 959-972 are compositionally biased toward basic and acidic residues; the sequence is NGHHPKKQSDGMEE.

Acetylated on lysine residues by KAT8 upon ionizing radiation-induced DNA damage; deacetylated by HDAC3.

The protein is KAT8 regulatory NSL complex subunit 1-like protein (KANSL1L) of Homo sapiens (Human).